An 808-amino-acid chain; its full sequence is MENNSLPMDPAMDSSFMDGLLLEGCWLETTDASEFLNFSPSTSVAPFDPSSFMWSPTQDTSNSLSQMYGQDCPERSSLEDQNQGRDLSTFNRRWWIGPSGHHGFSVMERLVQAVTHIKDFTSERGSLIQLWVPVDRGGKRVLTTKEQPFSHDPMCQRLAHYREISENYQFSTEQEDSDSSSRDLVGLPGRVFLGKVPEWTPDVRFFKNEEYPRVQHAQDCDVRGTLAIPVFEQGSQICLGVIEVVMTTQMVKLSPDLESICRALQAVDLRSTEIPIPPSLKGPDFSYQAALPEIRNLLRCACETHKLPLAQTWVSCLKQSKTGCRHNDENYIHCVSTIDDACYVGDPTVREFHEACSEHHLLKGQGVVGEAFLTNGPCFSSDVSSYKKSEYPLSHHATMFGLHGTVAIRLRCIHTGSVDFVLEFFLPKNCRDIEEQRKMLNALSTIMAHVPRSLRTVTQKELEEEGDSMVSEVIEKGVTLPKIENTTEVHQSISTPQNVGLVFDGGTTEMGELGSEYGKGVSVNENNTFSSASGFNRVTEKKRTKAEKNITLDVLRQYFAGSLKDAAKSIGVCPTTLKRICRQHGIQRWPSRKIKKVGHSLQKIQRVIDSVEGVSGHHLPIGSFYASFPNLAASPEASSLQQQSKITTFLSYSHSPPAKSPGSSCSHSSSCSSETQVIKEDPTDKTRLVSRSFKETQTTHLSPSSQEDDFLRVKVSYEEEKIRFKMRNSHRLKDLLWEIAKRFSIEDVSRYDLKYLDEDNEWVLLRCDDDVEECVDVCRSFPGQTIKLLLQLSSSYLPERSSVSGCLS.

Residues 56–68 are compositionally biased toward polar residues; the sequence is PTQDTSNSLSQMY. Positions 56–83 are disordered; it reads PTQDTSNSLSQMYGQDCPERSSLEDQNQ. Residues 536 to 617 enclose the RWP-RK domain; the sequence is NRVTEKKRTK…IDSVEGVSGH (82 aa). A disordered region spans residues 660–680; the sequence is SPGSSCSHSSSCSSETQVIKE. Over residues 663 to 673 the composition is skewed to low complexity; sequence SSCSHSSSCSS. The PB1 domain maps to 710 to 793; that stretch reads FLRVKVSYEE…QTIKLLLQLS (84 aa).

It is found in the nucleus. Functionally, probable transcription factor. This is Protein NLP5 (NLP5) from Arabidopsis thaliana (Mouse-ear cress).